A 626-amino-acid polypeptide reads, in one-letter code: Colicin-Ia (626 aa).

The translocation (T) stretch occupies residues E23–G225. A compositionally biased stretch (polar residues) spans Q276–D286. A disordered region spans residues Q276–V308. The interval K282 to N385 is receptor-binding (R). Positions K450 to I626 are channel (C). The next 2 membrane-spanning stretches (helical) occupy residues A580 to S594 and G597 to I612.

The protein belongs to the channel forming colicin family.

The protein resides in the cell membrane. Its function is as follows. This colicin is a channel-forming colicin. This class of transmembrane toxins depolarize the cytoplasmic membrane, leading to dissipation of cellular energy. In terms of biological role, colicins are polypeptide toxins produced by and active against E.coli and closely related bacteria. This chain is Colicin-Ia (cia), found in Escherichia coli.